Reading from the N-terminus, the 421-residue chain is Glucose-1-phosphate adenylyltransferase (421 aa).

Residues Tyr109, Gly175, 190–191 (EK), and Ser208 contribute to the alpha-D-glucose 1-phosphate site.

The protein belongs to the bacterial/plant glucose-1-phosphate adenylyltransferase family. In terms of assembly, homotetramer.

It catalyses the reaction alpha-D-glucose 1-phosphate + ATP + H(+) = ADP-alpha-D-glucose + diphosphate. The protein operates within glycan biosynthesis; glycogen biosynthesis. In terms of biological role, involved in the biosynthesis of ADP-glucose, a building block required for the elongation reactions to produce glycogen. Catalyzes the reaction between ATP and alpha-D-glucose 1-phosphate (G1P) to produce pyrophosphate and ADP-Glc. The polypeptide is Glucose-1-phosphate adenylyltransferase (Teredinibacter turnerae (strain ATCC 39867 / T7901)).